Reading from the N-terminus, the 357-residue chain is uncharacterized protein (357 aa).

The Radical SAM core domain occupies 27–242 (HFGNTVTFER…VSSVRLNFPK (216 aa)). Positions 44, 50, and 53 each coordinate [4Fe-4S] cluster.

The cofactor is [4Fe-4S] cluster.

This is an uncharacterized protein from Methanocaldococcus jannaschii (strain ATCC 43067 / DSM 2661 / JAL-1 / JCM 10045 / NBRC 100440) (Methanococcus jannaschii).